A 107-amino-acid polypeptide reads, in one-letter code: uncharacterized protein (107 aa).

A run of 3 helical transmembrane segments spans residues 16–36 (VIPCTLSSPSFVLMAVISESL), 47–67 (IISLIESAVTSLSYVTWHSLV), and 85–105 (LIVLVQALHVIPCTASITSLI).

The protein resides in the membrane. This is an uncharacterized protein from Saccharomyces cerevisiae (strain ATCC 204508 / S288c) (Baker's yeast).